An 817-amino-acid chain; its full sequence is Cargo-transport protein YPP1 (817 aa).

It belongs to the YPP1 family. Interacts with ribosomes.

Its subcellular location is the cytoplasmic granule. The protein localises to the cell membrane. Its function is as follows. Involved in endocytosis. This is Cargo-transport protein YPP1 (YPP1) from Saccharomyces cerevisiae (strain ATCC 204508 / S288c) (Baker's yeast).